Reading from the N-terminus, the 275-residue chain is Large ribosomal subunit protein uL2c (275 aa).

Disordered stretches follow at residues 32-53 (SLSK…TCRH) and 218-242 (PTVR…APIG).

This sequence belongs to the universal ribosomal protein uL2 family. In terms of assembly, part of the 50S ribosomal subunit.

It is found in the plastid. The protein localises to the chloroplast. This Tetradesmus obliquus (Green alga) protein is Large ribosomal subunit protein uL2c (rpl2).